Reading from the N-terminus, the 672-residue chain is Transcription factor tau 91 kDa subunit (672 aa).

A required for DNA-binding region spans residues Met-1–Arg-158. Residues Ala-6–Ala-18 constitute a DNA-binding region (a.T hook). Disordered stretches follow at residues Ser-24–Lys-45 and Val-67–Pro-156. The segment covering Asp-71–Leu-100 has biased composition (acidic residues). Residues Leu-159–Ser-672 form a sufficient for interaction with TFC8 region. A disulfide bond links Cys-375 and Cys-383.

In terms of assembly, heterodimer with TFC8. Component of the TFIIIC complex composed of TFC1, TFC3, TFC4, TFC6, TFC7 and TFC8. The subunits are organized in two globular domains, tauA and tauB, connected by a proteolysis-sensitive and flexible linker. Interacts with TFC1, TFC3, TFC4 and directly with TFC8.

Its subcellular location is the nucleus. In terms of biological role, TFIIIC mediates tRNA and 5S RNA gene activation by binding to intragenic promoter elements. Upstream of the transcription start site, TFIIIC assembles the initiation complex TFIIIB-TFIIIC-tDNA, which is sufficient for RNA polymerase III recruitment and function. Part of the tauB domain of TFIIIC that binds boxB DNA promoter sites of tRNA and similar genes. Cooperates with TFC3 in DNA binding. The chain is Transcription factor tau 91 kDa subunit (TFC6) from Saccharomyces cerevisiae (strain ATCC 204508 / S288c) (Baker's yeast).